The chain runs to 544 residues: Chaperonin GroEL 1 (544 aa).

ATP is bound by residues 30–33 (TLGP), K51, 87–91 (DGTTT), G415, 479–481 (NAA), and D495.

Belongs to the chaperonin (HSP60) family. In terms of assembly, forms a cylinder of 14 subunits composed of two heptameric rings stacked back-to-back. Interacts with the co-chaperonin GroES.

It is found in the cytoplasm. It carries out the reaction ATP + H2O + a folded polypeptide = ADP + phosphate + an unfolded polypeptide.. In terms of biological role, together with its co-chaperonin GroES, plays an essential role in assisting protein folding. The GroEL-GroES system forms a nano-cage that allows encapsulation of the non-native substrate proteins and provides a physical environment optimized to promote and accelerate protein folding. In Vibrio cholerae serotype O1 (strain ATCC 39315 / El Tor Inaba N16961), this protein is Chaperonin GroEL 1.